An 880-amino-acid chain; its full sequence is MTIEHSNVGERYNPRAREQKWQAIWDEKKIFQITEENCREKYYVLEMFPYPSGRIHMGHVRNYTMGDVVARYKRAKGFDVLHPMGWDAFGMPAENAALQSKVHPKTWTYQNIAVMRGQLKQLGLSLDWSREFATCDVAYYHRQQMLFLDLYQKGLVARKVAKVNWDPVDQTVLANEQVVDGCGWRSGALVEQRELAQWFFKISDFSEDLLAGLEELEQWPEKVRTMQKNWIGKSQGLLIRWALKSTNGADEVCEAFNEVVCYSTRPDTLFGASFLALSVDHPISQALAQKDKALSAFIENCRCGGMTTAALETAEKQGFCTSLLAVHPFNPRIHLPVYIANFVLMDYGTGAVFGCPAHDQRDWDFAHKYDLPVQPVVLPKGSDAEDFVIAETPYTGDGVMINSDFLDGLTPQEAFEAAAERLEGQMLNGQPQGKRTVQFRLRDWGISRQRYWGCPIPIIHCAACGVVPVPRADLPVELPDDVTFDQPGNPLERHEKWQKVACPVCGQSAKRETDTMDTFVDSSWYYARFTAPWAQEPVDKNAIAEWLPVQQYIGGIEHAILHLLYARFFMRAMKLIGYVTVDEPFKGLFTQGMVVHETYRDDQGWVSPAEISIIEKDGKRQAHKLTDQSEVTIGLIEKMSKSKKNVVDPDDIIASYGADTVRWFVLSDSPPERDVIWTESGVEGAYRFVQRVWRCVVLSAPVLKEVIPCTGHQGAALELSKAAHRMLCTVEDDLEKFAFNRAIARLYEFLNIMAPLLNKIASVEDEMKASLRQAMDFFLALIAPIMPHLAEECHAALGGKTLICELPWPVYDPALIVEDCCTLPVQINGKKRGEVTVAATASEAMIEEAVLALDFVQAHLVEKSIKKMIIVPQRIVNVVL.

A 'HIGH' region motif is present at residues 49-59; the sequence is PYPSGRIHMGH. The 'KMSKS' region motif lies at 638–642; that stretch reads KMSKS. Position 641 (Lys-641) interacts with ATP.

The protein belongs to the class-I aminoacyl-tRNA synthetase family.

The protein resides in the cytoplasm. The enzyme catalyses tRNA(Leu) + L-leucine + ATP = L-leucyl-tRNA(Leu) + AMP + diphosphate. The sequence is that of Leucine--tRNA ligase from Bartonella quintana (strain Toulouse) (Rochalimaea quintana).